A 223-amino-acid polypeptide reads, in one-letter code: MLYRSISCPKGTFFMTTPPAAAEIFGDNLEKAIAYHESLATDGSVRGFIGPREVPRLWDRHILNCGVIGEAMDEGISVADIGSGAGLPGIPLAIARPDLNITLIEPLLKRSVYLNEVKEALNLDNVTVIRGRAEEKVVRKQVGLVDIVTSRAVAPLGKLATWSLPLVKIGGRMVAMKGSSVEEEIERDAKEIRKAGGTDIKVYTVGEALLSEPTTLISIRREK.

S-adenosyl-L-methionine contacts are provided by residues Gly-82, Leu-87, 133-134 (AE), and Arg-151.

This sequence belongs to the methyltransferase superfamily. RNA methyltransferase RsmG family.

The protein localises to the cytoplasm. Specifically methylates the N7 position of guanine in position 518 of 16S rRNA. The protein is Ribosomal RNA small subunit methyltransferase G of Corynebacterium glutamicum (strain R).